Reading from the N-terminus, the 189-residue chain is Hypoxanthine/guanine phosphoribosyltransferase (189 aa).

Belongs to the purine/pyrimidine phosphoribosyltransferase family. Archaeal HPRT subfamily. In terms of assembly, homodimer.

Its subcellular location is the cytoplasm. It carries out the reaction IMP + diphosphate = hypoxanthine + 5-phospho-alpha-D-ribose 1-diphosphate. The catalysed reaction is GMP + diphosphate = guanine + 5-phospho-alpha-D-ribose 1-diphosphate. Its pathway is purine metabolism; IMP biosynthesis via salvage pathway; IMP from hypoxanthine: step 1/1. Catalyzes a salvage reaction resulting in the formation of IMP that is energically less costly than de novo synthesis. In Methanosarcina mazei (strain ATCC BAA-159 / DSM 3647 / Goe1 / Go1 / JCM 11833 / OCM 88) (Methanosarcina frisia), this protein is Hypoxanthine/guanine phosphoribosyltransferase.